Here is a 339-residue protein sequence, read N- to C-terminus: Phenylalanine--tRNA ligase alpha subunit (339 aa).

Position 254 (E254) interacts with Mg(2+).

The protein belongs to the class-II aminoacyl-tRNA synthetase family. Phe-tRNA synthetase alpha subunit type 1 subfamily. As to quaternary structure, tetramer of two alpha and two beta subunits. Mg(2+) serves as cofactor.

It is found in the cytoplasm. The catalysed reaction is tRNA(Phe) + L-phenylalanine + ATP = L-phenylalanyl-tRNA(Phe) + AMP + diphosphate + H(+). The chain is Phenylalanine--tRNA ligase alpha subunit from Clostridium botulinum (strain 657 / Type Ba4).